We begin with the raw amino-acid sequence, 425 residues long: Phosphomethylpyrimidine synthase (425 aa).

Substrate contacts are provided by residues Asn66, Met95, Tyr124, His159, 181–183 (SRG), 222–225 (DAYR), and Glu261. His265 serves as a coordination point for Zn(2+). Tyr288 is a substrate binding site. His329 contacts Zn(2+). [4Fe-4S] cluster-binding residues include Cys406, Cys409, and Cys413.

Belongs to the ThiC family. [4Fe-4S] cluster serves as cofactor.

It carries out the reaction 5-amino-1-(5-phospho-beta-D-ribosyl)imidazole + S-adenosyl-L-methionine = 4-amino-2-methyl-5-(phosphooxymethyl)pyrimidine + CO + 5'-deoxyadenosine + formate + L-methionine + 3 H(+). It functions in the pathway cofactor biosynthesis; thiamine diphosphate biosynthesis. Functionally, catalyzes the synthesis of the hydroxymethylpyrimidine phosphate (HMP-P) moiety of thiamine from aminoimidazole ribotide (AIR) in a radical S-adenosyl-L-methionine (SAM)-dependent reaction. This chain is Phosphomethylpyrimidine synthase, found in Archaeoglobus fulgidus (strain ATCC 49558 / DSM 4304 / JCM 9628 / NBRC 100126 / VC-16).